A 355-amino-acid polypeptide reads, in one-letter code: Alanine racemase (355 aa).

Lysine 34 acts as the Proton acceptor; specific for D-alanine in catalysis. At lysine 34 the chain carries N6-(pyridoxal phosphate)lysine. A substrate-binding site is contributed by arginine 133. Tyrosine 249 functions as the Proton acceptor; specific for L-alanine in the catalytic mechanism. Methionine 297 is a substrate binding site.

The protein belongs to the alanine racemase family. Requires pyridoxal 5'-phosphate as cofactor.

It carries out the reaction L-alanine = D-alanine. The protein operates within amino-acid biosynthesis; D-alanine biosynthesis; D-alanine from L-alanine: step 1/1. Catalyzes the interconversion of L-alanine and D-alanine. May also act on other amino acids. This chain is Alanine racemase (alr), found in Rickettsia africae (strain ESF-5).